A 395-amino-acid polypeptide reads, in one-letter code: Succinyl-diaminopimelate desuccinylase (395 aa).

A Zn(2+)-binding site is contributed by H74. D76 is a catalytic residue. Residue D107 coordinates Zn(2+). The active-site Proton acceptor is the E141. Residues E142, E170, and H368 each coordinate Zn(2+).

This sequence belongs to the peptidase M20A family. DapE subfamily. In terms of assembly, homodimer. The cofactor is Zn(2+). Co(2+) is required as a cofactor.

The catalysed reaction is N-succinyl-(2S,6S)-2,6-diaminopimelate + H2O = (2S,6S)-2,6-diaminopimelate + succinate. It participates in amino-acid biosynthesis; L-lysine biosynthesis via DAP pathway; LL-2,6-diaminopimelate from (S)-tetrahydrodipicolinate (succinylase route): step 3/3. In terms of biological role, catalyzes the hydrolysis of N-succinyl-L,L-diaminopimelic acid (SDAP), forming succinate and LL-2,6-diaminopimelate (DAP), an intermediate involved in the bacterial biosynthesis of lysine and meso-diaminopimelic acid, an essential component of bacterial cell walls. The polypeptide is Succinyl-diaminopimelate desuccinylase (Chelativorans sp. (strain BNC1)).